The sequence spans 478 residues: Transposase for insertion sequence element IS231D (478 aa).

This sequence belongs to the transposase 11 family.

Its function is as follows. Involved in the transposition of the insertion sequence. In Bacillus thuringiensis subsp. finitimus, this protein is Transposase for insertion sequence element IS231D.